Consider the following 464-residue polypeptide: Rhodopsin (464 aa).

The Extracellular segment spans residues 1 to 33 (MGRDIPDNETWWYNPTMEVHPHWKQFNQVPDAV). A glycan (N-linked (GlcNAc...) asparagine) is linked at Asn-8. A helical membrane pass occupies residues 34–58 (YYSLGIFIGICGIIGCTGNGIVIYL). Over 59 to 70 (FTKTKSLQTPAN) the chain is Cytoplasmic. Residues 71-97 (MFIINLAFSDFTFSLVNGFPLMTISCF) form a helical membrane-spanning segment. The Extracellular segment spans residues 98 to 109 (IKKWVFGMAACK). Cys-108 and Cys-186 are joined by a disulfide. Residues 110-131 (VYGFIGGIFGLMSIMTMSMISI) traverse the membrane as a helical segment. The 'Ionic lock' involved in activated form stabilization signature appears at 132–134 (DRY). At 132–151 (DRYNVIGRPMAASKKMSHRR) the chain is on the cytoplasmic side. Residues 152–172 (AFLMIIFVWMWSTLWSIGPIF) form a helical membrane-spanning segment. The Extracellular segment spans residues 173–199 (GWGAYVLEGVLCNCSFDYITRDSATRS). The helical transmembrane segment at 200-224 (NIVCMYIFAFCFPILIIFFCYFNIV) threads the bilayer. At 225 to 261 (MAVSNHEKEMAAMAKRLNAKELRKAQAGASAEMKLAK) the chain is on the cytoplasmic side. The chain crosses the membrane as a helical span at residues 262–283 (ISIVIVTQFLLSWSPYAVVALL). Over 284–293 (AQFGPIEWVT) the chain is Extracellular. Residues 294-315 (PYAAQLPVMFAKASAIHNPLIY) traverse the membrane as a helical segment. Lys-305 bears the N6-(retinylidene)lysine mark. The Cytoplasmic segment spans residues 316–464 (SVSHPKFREA…QGVDNQAYQA (149 aa)). Residues Cys-336 and Cys-337 are each lipidated (S-palmitoyl cysteine). Positions 344–464 (VEDDKDAETE…QGVDNQAYQA (121 aa)) are disordered. A compositionally biased stretch (low complexity) spans 367–401 (AAQMKEMMAMMQKMQQQQAAYPPQGAYPPQGGYPP). Composition is skewed to pro residues over residues 416-425 (QGYPPPPQGY) and 434-452 (QGYP…PQAA).

Belongs to the G-protein coupled receptor 1 family. Opsin subfamily. Post-translationally, contains one covalently linked retinal chromophore. Upon light absorption, the covalently bound 11-cis-retinal is converted to all-trans-retinal. After hydrolysis of the Schiff base and release of the covalently bound all-trans-retinal, active rhodopsin is regenerated by binding of a fresh molecule of 11-cis-retinal.

It is found in the cell projection. The protein localises to the rhabdomere membrane. Functionally, photoreceptor required for image-forming vision at low light intensity. Light-induced isomerization of 11-cis to all-trans retinal triggers a conformational change that activates signaling via G-proteins. Signaling mediates the activation of phospholipase C. Subsequent receptor phosphorylation mediates displacement of the bound G-protein alpha subunit by arrestin and terminates signaling. This chain is Rhodopsin (RHO), found in Sepia officinalis (Common cuttlefish).